Reading from the N-terminus, the 229-residue chain is Small ribosomal subunit protein uS3 (229 aa).

A KH type-2 domain is found at 18–87 (IDEYLAKQYY…NPQITITNVE (70 aa)).

It belongs to the universal ribosomal protein uS3 family. In terms of assembly, part of the 30S ribosomal subunit.

Functionally, binds the lower part of the 30S subunit head. This chain is Small ribosomal subunit protein uS3, found in Saccharolobus solfataricus (strain ATCC 35092 / DSM 1617 / JCM 11322 / P2) (Sulfolobus solfataricus).